A 691-amino-acid polypeptide reads, in one-letter code: Elongation factor G (691 aa).

The region spanning 8–283 (EKQRNIGIMA…AVVQYLPSPL (276 aa)) is the tr-type G domain. GTP is bound by residues 17 to 24 (AHIDAGKT), 81 to 85 (DTPGH), and 135 to 138 (NKMD).

This sequence belongs to the TRAFAC class translation factor GTPase superfamily. Classic translation factor GTPase family. EF-G/EF-2 subfamily.

It localises to the cytoplasm. In terms of biological role, catalyzes the GTP-dependent ribosomal translocation step during translation elongation. During this step, the ribosome changes from the pre-translocational (PRE) to the post-translocational (POST) state as the newly formed A-site-bound peptidyl-tRNA and P-site-bound deacylated tRNA move to the P and E sites, respectively. Catalyzes the coordinated movement of the two tRNA molecules, the mRNA and conformational changes in the ribosome. This is Elongation factor G from Lawsonia intracellularis (strain PHE/MN1-00).